We begin with the raw amino-acid sequence, 501 residues long: Aldehyde dehydrogenase 1A1 (501 aa).

Ser-2 carries the N-acetylserine modification. N6-acetyllysine is present on residues Lys-91 and Lys-128. Residues 167-170 (IPWN), 193-196 (KPAE), 226-227 (GP), and 246-247 (GS) each bind NAD(+). Lys-252 carries the post-translational modification N6-acetyllysine. Residue Glu-269 is the Proton acceptor of the active site. 269-271 (ELG) serves as a coordination point for NAD(+). Cys-303 (nucleophile) is an active-site residue. Residues 336–501 (LTPGVSQGPQ…VTIKISQKNS (166 aa)) form a mediates interaction with PRMT3 region. The residue at position 337 (Thr-337) is a Phosphothreonine. Position 349 to 353 (349 to 353 (EQYEK)) interacts with NAD(+). Lys-353 and Lys-367 each carry N6-acetyllysine. NAD(+) is bound at residue 400-402 (EIF). At Lys-410 the chain carries N6-acetyllysine. At Ser-413 the chain carries Phosphoserine. Lys-419 and Lys-495 each carry N6-acetyllysine.

It belongs to the aldehyde dehydrogenase family. As to quaternary structure, homotetramer. Interacts with PRMT3; the interaction is direct, inhibits ALDH1A1 aldehyde dehydrogenase activity and is independent of the methyltransferase activity of PRMT3. Post-translationally, the N-terminus is blocked most probably by acetylation.

It is found in the cytoplasm. The protein resides in the cytosol. Its subcellular location is the cell projection. The protein localises to the axon. The catalysed reaction is an aldehyde + NAD(+) + H2O = a carboxylate + NADH + 2 H(+). It catalyses the reaction all-trans-retinal + NAD(+) + H2O = all-trans-retinoate + NADH + 2 H(+). The enzyme catalyses 9-cis-retinal + NAD(+) + H2O = 9-cis-retinoate + NADH + 2 H(+). It carries out the reaction 11-cis-retinal + NAD(+) + H2O = 11-cis-retinoate + NADH + 2 H(+). The catalysed reaction is 13-cis-retinal + NAD(+) + H2O = 13-cis-retinoate + NADH + 2 H(+). It catalyses the reaction 3-deoxyglucosone + NAD(+) + H2O = 2-dehydro-3-deoxy-D-gluconate + NADH + 2 H(+). The enzyme catalyses (E)-4-hydroxynon-2-enal + NAD(+) + H2O = (E)-4-hydroxynon-2-enoate + NADH + 2 H(+). It carries out the reaction malonaldehyde + NAD(+) + H2O = 3-oxopropanoate + NADH + 2 H(+). The catalysed reaction is hexanal + NAD(+) + H2O = hexanoate + NADH + 2 H(+). It catalyses the reaction propanal + NAD(+) + H2O = propanoate + NADH + 2 H(+). The enzyme catalyses acetaldehyde + NAD(+) + H2O = acetate + NADH + 2 H(+). It carries out the reaction benzaldehyde + NAD(+) + H2O = benzoate + NADH + 2 H(+). The catalysed reaction is 4-aminobutanal + NAD(+) + H2O = 4-aminobutanoate + NADH + 2 H(+). It functions in the pathway cofactor metabolism; retinol metabolism. Its activity is regulated as follows. Inhibited by duocarmycin analogs. In terms of biological role, cytosolic dehydrogenase that catalyzes the irreversible oxidation of a wide range of aldehydes to their corresponding carboxylic acid. Functions downstream of retinol dehydrogenases and catalyzes the oxidation of retinaldehyde into retinoic acid, the second step in the oxidation of retinol/vitamin A into retinoic acid. This pathway is crucial to control the levels of retinol and retinoic acid, two important molecules which excess can be teratogenic and cytotoxic. Also oxidizes aldehydes resulting from lipid peroxidation like (E)-4-hydroxynon-2-enal/HNE, malonaldehyde and hexanal that form protein adducts and are highly cytotoxic. By participating for instance to the clearance of (E)-4-hydroxynon-2-enal/HNE in the lens epithelium prevents the formation of HNE-protein adducts and lens opacification. Also functions downstream of fructosamine-3-kinase in the fructosamine degradation pathway by catalyzing the oxidation of 3-deoxyglucosone, the carbohydrate product of fructosamine 3-phosphate decomposition, which is itself a potent glycating agent that may react with lysine and arginine side-chains of proteins. Also has an aminobutyraldehyde dehydrogenase activity and is probably part of an alternative pathway for the biosynthesis of GABA/4-aminobutanoate in midbrain, thereby playing a role in GABAergic synaptic transmission. In Ovis aries (Sheep), this protein is Aldehyde dehydrogenase 1A1.